A 338-amino-acid polypeptide reads, in one-letter code: tRNA N6-adenosine threonylcarbamoyltransferase (338 aa).

Residues His110 and His114 each contribute to the Fe cation site. Residues 132–136 (VLSGG), Asp165, Gly178, and Asn274 each bind substrate. A Fe cation-binding site is contributed by Asp298.

The protein belongs to the KAE1 / TsaD family. Fe(2+) is required as a cofactor.

It is found in the cytoplasm. The catalysed reaction is L-threonylcarbamoyladenylate + adenosine(37) in tRNA = N(6)-L-threonylcarbamoyladenosine(37) in tRNA + AMP + H(+). Its function is as follows. Required for the formation of a threonylcarbamoyl group on adenosine at position 37 (t(6)A37) in tRNAs that read codons beginning with adenine. Is involved in the transfer of the threonylcarbamoyl moiety of threonylcarbamoyl-AMP (TC-AMP) to the N6 group of A37, together with TsaE and TsaB. TsaD likely plays a direct catalytic role in this reaction. This is tRNA N6-adenosine threonylcarbamoyltransferase from Borrelia duttonii (strain Ly).